A 353-amino-acid polypeptide reads, in one-letter code: UPF0283 membrane protein YcjF (353 aa).

A run of 3 helical transmembrane segments spans residues 70–90, 100–120, and 213–233; these read MVMGGLALFGASVVGQGVQWT, VALGGCAAGALIIGAGVGSVV, and ESTLMIAVSPLALVDMAFIAW.

It belongs to the UPF0283 family.

Its subcellular location is the cell inner membrane. This chain is UPF0283 membrane protein YcjF, found in Escherichia coli O45:K1 (strain S88 / ExPEC).